The primary structure comprises 774 residues: Probable E3 ubiquitin-protein ligase HECTD2 (774 aa).

The interval 1-51 (MSEAARDLSPGAPPAVAAAAPEERKGKEPEREKLPPIVTAGAAAGLDRGSK) is disordered. Residue S9 is modified to Phosphoserine. Residues 21–34 (PEERKGKEPEREKL) are compositionally biased toward basic and acidic residues. The region spanning 435-774 (KRADLKKKLK…ISNSEGFGLE (340 aa)) is the HECT domain. C742 (glycyl thioester intermediate) is an active-site residue.

The enzyme catalyses S-ubiquitinyl-[E2 ubiquitin-conjugating enzyme]-L-cysteine + [acceptor protein]-L-lysine = [E2 ubiquitin-conjugating enzyme]-L-cysteine + N(6)-ubiquitinyl-[acceptor protein]-L-lysine.. Its pathway is protein modification; protein ubiquitination. Its function is as follows. E3 ubiquitin-protein ligase which accepts ubiquitin from an E2 ubiquitin-conjugating enzyme in the form of a thioester and then directly transfers the ubiquitin to targeted substrates. This is Probable E3 ubiquitin-protein ligase HECTD2 (Hectd2) from Mus musculus (Mouse).